Reading from the N-terminus, the 311-residue chain is Methionyl-tRNA formyltransferase (311 aa).

A (6S)-5,6,7,8-tetrahydrofolate-binding site is contributed by 110 to 113 (SLLP).

The protein belongs to the Fmt family.

It catalyses the reaction L-methionyl-tRNA(fMet) + (6R)-10-formyltetrahydrofolate = N-formyl-L-methionyl-tRNA(fMet) + (6S)-5,6,7,8-tetrahydrofolate + H(+). Its function is as follows. Attaches a formyl group to the free amino group of methionyl-tRNA(fMet). The formyl group appears to play a dual role in the initiator identity of N-formylmethionyl-tRNA by promoting its recognition by IF2 and preventing the misappropriation of this tRNA by the elongation apparatus. The sequence is that of Methionyl-tRNA formyltransferase from Streptococcus pyogenes serotype M1.